The primary structure comprises 510 residues: NKAP family protein (510 aa).

Residues 1-22 (MSHRERDRDRDRDSDRDRDRNR) are compositionally biased toward basic and acidic residues. Disordered stretches follow at residues 1-128 (MSHR…VEIQ), 149-220 (ERKD…NYNG), and 239-401 (VYER…PISE). A compositionally biased stretch (basic residues) spans 23-39 (YSRSRSRGSRSRSRSRS). Residues 40 to 89 (RSRDRNRNRDYNKDRSSNRDSYYNDRDYKKDRSSNRDRDYYDRDRNRDYK) are compositionally biased toward basic and acidic residues. Positions 96–105 (SSGGGGGGSG) are enriched in gly residues. 2 stretches are compositionally biased toward low complexity: residues 112–123 (SSSYRESNSNNS) and 184–219 (NNNN…SNYN). The segment covering 262-273 (NKKKSKKSRRKS) has biased composition (basic residues). Residues 274 to 283 (SSNSDSSSSD) show a composition bias toward low complexity. Residues 292-322 (REKRKKSKSRKDKKKRKEKKKHQRKSSKRSS) are compositionally biased toward basic residues. Positions 342–351 (DSDRSDSEGR) are enriched in basic and acidic residues. The segment covering 352-367 (SRKKRSKKRSKKRHDH) has biased composition (basic residues). The segment covering 368 to 383 (HKESVHDASMWEEKVE) has biased composition (basic and acidic residues).

It belongs to the NKAP family.

This chain is NKAP family protein, found in Dictyostelium discoideum (Social amoeba).